A 212-amino-acid chain; its full sequence is Pyridoxine/pyridoxamine 5'-phosphate oxidase (212 aa).

Substrate is bound by residues arginine 8–tyrosine 11 and lysine 66. FMN is bound by residues arginine 61 to lysine 66, phenylalanine 76 to threonine 77, arginine 82, lysine 83, and glutamine 105. The substrate site is built by tyrosine 123, arginine 127, and serine 131. Residues glutamine 140 to serine 141 and tryptophan 184 each bind FMN. Residue arginine 190–histidine 192 coordinates substrate. Arginine 194 is a binding site for FMN.

Belongs to the pyridoxamine 5'-phosphate oxidase family. Homodimer. The cofactor is FMN.

It carries out the reaction pyridoxamine 5'-phosphate + O2 + H2O = pyridoxal 5'-phosphate + H2O2 + NH4(+). The catalysed reaction is pyridoxine 5'-phosphate + O2 = pyridoxal 5'-phosphate + H2O2. It participates in cofactor metabolism; pyridoxal 5'-phosphate salvage; pyridoxal 5'-phosphate from pyridoxamine 5'-phosphate: step 1/1. Its pathway is cofactor metabolism; pyridoxal 5'-phosphate salvage; pyridoxal 5'-phosphate from pyridoxine 5'-phosphate: step 1/1. Its function is as follows. Catalyzes the oxidation of either pyridoxine 5'-phosphate (PNP) or pyridoxamine 5'-phosphate (PMP) into pyridoxal 5'-phosphate (PLP). The chain is Pyridoxine/pyridoxamine 5'-phosphate oxidase from Cupriavidus metallidurans (strain ATCC 43123 / DSM 2839 / NBRC 102507 / CH34) (Ralstonia metallidurans).